An 821-amino-acid polypeptide reads, in one-letter code: Putative outer membrane usher protein YqiG (821 aa).

An N-terminal signal peptide occupies residues 1-20 (MSGNIGANPVIIIGCASAYA). Cys798 and Cys817 are oxidised to a cystine.

The protein belongs to the fimbrial export usher family.

It is found in the cell outer membrane. May be involved in H(2) production during fermentative growth. Involved in the export and assembly of a fimbrial subunit across the outer membrane. This Escherichia coli (strain K12) protein is Putative outer membrane usher protein YqiG (yqiG).